The following is a 249-amino-acid chain: 3-deoxy-D-manno-octulosonic acid kinase (249 aa).

Residue aspartate 175 is part of the active site.

It belongs to the protein kinase superfamily. KdkA/RfaP family.

It localises to the cell inner membrane. It carries out the reaction an alpha-Kdo-(2-&gt;6)-lipid IVA + ATP = a 4-O-phospho-alpha-Kdo-(2-&gt;6)-lipid IVA + ADP + H(+). It participates in bacterial outer membrane biogenesis; LPS core biosynthesis. In terms of biological role, catalyzes the ATP-dependent phosphorylation of the 3-deoxy-D-manno-octulosonic acid (Kdo) residue in Kdo-lipid IV(A) at the 4-OH position. The sequence is that of 3-deoxy-D-manno-octulosonic acid kinase from Xylella fastidiosa (strain M12).